Here is a 188-residue protein sequence, read N- to C-terminus: Elongation factor P (188 aa).

K34 bears the N6-(3,6-diaminohexanoyl)-5-hydroxylysine mark.

Belongs to the elongation factor P family. Post-translationally, may be beta-lysylated on the epsilon-amino group of Lys-34 by the combined action of EpmA and EpmB, and then hydroxylated on the C5 position of the same residue by EpmC (if this protein is present). Lysylation is critical for the stimulatory effect of EF-P on peptide-bond formation. The lysylation moiety may extend toward the peptidyltransferase center and stabilize the terminal 3-CCA end of the tRNA. Hydroxylation of the C5 position on Lys-34 may allow additional potential stabilizing hydrogen-bond interactions with the P-tRNA.

Its subcellular location is the cytoplasm. Its pathway is protein biosynthesis; polypeptide chain elongation. Its function is as follows. Involved in peptide bond synthesis. Alleviates ribosome stalling that occurs when 3 or more consecutive Pro residues or the sequence PPG is present in a protein, possibly by augmenting the peptidyl transferase activity of the ribosome. Modification of Lys-34 is required for alleviation. In Stenotrophomonas maltophilia (strain R551-3), this protein is Elongation factor P.